The sequence spans 413 residues: MAYEIIDNIAAEGAPYYTPAQDPPAGTQTSGSTKVFTPITIRGVTFPNRLFLAPLCQYSAKDGYATDWHLTHLGGIIQRGPGLSMVEATAVQNHGRITPQDVGLWEDGQIEPLKRITTFAHSQSQKIGIQLSHAGRKASCVSPWLSINAVAAKEVGGWPDNIVAPSAIAQEAGVNPVPKAFTKEDIEELKNDFLAAAKRAIRAGFDVIEIHAAHGYLLHQFLSPVSNQRTDEYGGSFENRIRVVLEIIDLIRGEIPETTPILVRVSATDWFEYDAQFKDEFPESWTVEQTCKLAQILPKHGVDLVDVSSGGIHPKSAIAIKAGPAYQVDLAKQVKKAVGDSVLVSAVGGIKTGHLAEEVLQSGIDVVRAGRWFQQNPGLVRAFANELGVEVKMANQIDWSFKGRGKNGHKKSP.

Residue 53 to 56 participates in FMN binding; that stretch reads APLC. Tyr58 is a substrate binding site. FMN contacts are provided by Ala88 and Gln130. 211-214 lines the substrate pocket; sequence HAAH. FMN contacts are provided by residues Arg264 and 370–371; that span reads GR.

The protein belongs to the NADH:flavin oxidoreductase/NADH oxidase family. NamA subfamily. Requires FMN as cofactor.

Its pathway is mycotoxin biosynthesis. Functionally, NADH:flavin oxidoreductase; part of the gene cluster that mediates the biosynthesis of butenolide, a mycotoxin that shows antibiotic activity but does not seem to play a major role in the spread of head blight in wheat. Butenolide is derived from glutamic acid via a 4-acetamido-2-butenoic acid intermediate. The predicted function of the NADH:flavin oxidoreductase FG08077, the cytochrome P450 monooxygenase FG08079, the decarboxylase FG08083, and the putative acetyltransferase FG08082 are consistent with this pathway, however, the respective activities of the butelonide biosynthesis cluster enzymes have still to be experimentally determined. This Gibberella zeae (strain ATCC MYA-4620 / CBS 123657 / FGSC 9075 / NRRL 31084 / PH-1) (Wheat head blight fungus) protein is NADH:flavin oxidoreductase FG08077.